Consider the following 1379-residue polypeptide: DNA-directed RNA polymerase subunit beta'' (1379 aa).

4 residues coordinate Zn(2+): Cys-220, Cys-293, Cys-300, and Cys-303.

Belongs to the RNA polymerase beta' chain family. RpoC2 subfamily. In terms of assembly, in plastids the minimal PEP RNA polymerase catalytic core is composed of four subunits: alpha, beta, beta', and beta''. When a (nuclear-encoded) sigma factor is associated with the core the holoenzyme is formed, which can initiate transcription. The cofactor is Zn(2+).

It is found in the plastid. It localises to the chloroplast. It catalyses the reaction RNA(n) + a ribonucleoside 5'-triphosphate = RNA(n+1) + diphosphate. DNA-dependent RNA polymerase catalyzes the transcription of DNA into RNA using the four ribonucleoside triphosphates as substrates. The polypeptide is DNA-directed RNA polymerase subunit beta'' (Capsella bursa-pastoris (Shepherd's purse)).